Consider the following 543-residue polypeptide: Glucose-6-phosphate isomerase (543 aa).

The active-site Proton donor is Glu353. Residues His384 and Lys504 contribute to the active site.

The protein belongs to the GPI family.

Its subcellular location is the cytoplasm. It catalyses the reaction alpha-D-glucose 6-phosphate = beta-D-fructose 6-phosphate. It participates in carbohydrate biosynthesis; gluconeogenesis. It functions in the pathway carbohydrate degradation; glycolysis; D-glyceraldehyde 3-phosphate and glycerone phosphate from D-glucose: step 2/4. In terms of biological role, catalyzes the reversible isomerization of glucose-6-phosphate to fructose-6-phosphate. The chain is Glucose-6-phosphate isomerase from Roseiflexus sp. (strain RS-1).